A 135-amino-acid chain; its full sequence is Fluoride-specific ion channel FluC (135 aa).

The next 4 membrane-spanning stretches (helical) occupy residues 12-32 (FLVI…LGLS), 42-62 (LGTL…VGIF), 70-90 (LAWK…FSTF), and 106-126 (AIGL…LGLL). Residues glycine 82 and threonine 85 each contribute to the Na(+) site.

It belongs to the fluoride channel Fluc/FEX (TC 1.A.43) family.

The protein localises to the cell inner membrane. It catalyses the reaction fluoride(in) = fluoride(out). Na(+) is not transported, but it plays an essential structural role and its presence is essential for fluoride channel function. Fluoride-specific ion channel. Important for reducing fluoride concentration in the cell, thus reducing its toxicity. This Dechloromonas aromatica (strain RCB) protein is Fluoride-specific ion channel FluC.